We begin with the raw amino-acid sequence, 399 residues long: uncharacterized protein (399 aa).

This sequence belongs to the NADH:flavin oxidoreductase/NADH oxidase family. As to quaternary structure, directly interacts with lipoylated GcvH-L (SpyM50867).

This is an uncharacterized protein from Streptococcus pyogenes serotype M5 (strain Manfredo).